The following is a 444-amino-acid chain: Phosphoribosylamine--glycine ligase (444 aa).

The ATP-grasp domain maps to 109–324 (RNLFKKYNIK…FLEVCEAIVN (216 aa)). 140–202 (LTEKGIKAVV…EEKLEGVEFT (63 aa)) provides a ligand contact to ATP. Positions 282, 294, and 296 each coordinate Mg(2+). Mn(2+)-binding residues include Gln282, Glu294, and Asn296.

Belongs to the GARS family. Requires Mg(2+) as cofactor. It depends on Mn(2+) as a cofactor.

The catalysed reaction is 5-phospho-beta-D-ribosylamine + glycine + ATP = N(1)-(5-phospho-beta-D-ribosyl)glycinamide + ADP + phosphate + H(+). The protein operates within purine metabolism; IMP biosynthesis via de novo pathway; N(1)-(5-phospho-D-ribosyl)glycinamide from 5-phospho-alpha-D-ribose 1-diphosphate: step 2/2. The chain is Phosphoribosylamine--glycine ligase from Methanocaldococcus jannaschii (strain ATCC 43067 / DSM 2661 / JAL-1 / JCM 10045 / NBRC 100440) (Methanococcus jannaschii).